A 264-amino-acid chain; its full sequence is ATP synthase subunit a (264 aa).

A run of 5 helical transmembrane segments spans residues 39-59 (LDTL…FYIV), 97-117 (VAPL…MDLV), 139-159 (TADP…VIFY), 205-225 (LFGN…LPWW), and 239-259 (LLVI…YISL).

This sequence belongs to the ATPase A chain family. F-type ATPases have 2 components, CF(1) - the catalytic core - and CF(0) - the membrane proton channel. CF(1) has five subunits: alpha(3), beta(3), gamma(1), delta(1), epsilon(1). CF(0) has three main subunits: a(1), b(2) and c(9-12). The alpha and beta chains form an alternating ring which encloses part of the gamma chain. CF(1) is attached to CF(0) by a central stalk formed by the gamma and epsilon chains, while a peripheral stalk is formed by the delta and b chains.

The protein localises to the cell inner membrane. In terms of biological role, key component of the proton channel; it plays a direct role in the translocation of protons across the membrane. This chain is ATP synthase subunit a, found in Coxiella burnetii (strain RSA 331 / Henzerling II).